The sequence spans 207 residues: Protein TEX261 homolog (207 aa).

The next 4 membrane-spanning stretches (helical) occupy residues 2 to 22 (FLSLLILLSYALGFVFCVVCL), 54 to 74 (IIFLLGIFEDLDFTSLLFSFI), 94 to 114 (YKFILSVLSFIISHISWFIYF), and 126 to 146 (IIAIFTFCVWLIPLIFFISLA).

Belongs to the SVP26 family.

It localises to the membrane. The chain is Protein TEX261 homolog from Dictyostelium discoideum (Social amoeba).